Consider the following 305-residue polypeptide: UDP-3-O-acyl-N-acetylglucosamine deacetylase (305 aa).

Zn(2+) is bound by residues His79, His238, and Asp242. Residue His265 is the Proton donor of the active site.

The protein belongs to the LpxC family. Zn(2+) is required as a cofactor.

The enzyme catalyses a UDP-3-O-[(3R)-3-hydroxyacyl]-N-acetyl-alpha-D-glucosamine + H2O = a UDP-3-O-[(3R)-3-hydroxyacyl]-alpha-D-glucosamine + acetate. It participates in glycolipid biosynthesis; lipid IV(A) biosynthesis; lipid IV(A) from (3R)-3-hydroxytetradecanoyl-[acyl-carrier-protein] and UDP-N-acetyl-alpha-D-glucosamine: step 2/6. In terms of biological role, catalyzes the hydrolysis of UDP-3-O-myristoyl-N-acetylglucosamine to form UDP-3-O-myristoylglucosamine and acetate, the committed step in lipid A biosynthesis. The chain is UDP-3-O-acyl-N-acetylglucosamine deacetylase from Haemophilus influenzae (strain 86-028NP).